The following is a 79-amino-acid chain: U-actitoxin-Avd8b (79 aa).

The signal sequence occupies residues 1-19 (MKSLVIVFVVLLGVAMISA). Residues 20–36 (NEEELLAILQDQRNDAR) constitute a propeptide that is removed on maturation.

Belongs to the sea anemone 8 toxin family.

The protein localises to the secreted. It localises to the nematocyst. This Anemonia viridis (Snakelocks anemone) protein is U-actitoxin-Avd8b.